A 396-amino-acid polypeptide reads, in one-letter code: Unsaturated chondroitin disaccharide hydrolase (396 aa).

The active-site Nucleophile is the Asp-113. The substrate site is built by Asp-113, Asp-173, Gly-231, Thr-233, Arg-245, Trp-249, Ser-363, and Ser-366. Catalysis depends on Asp-173, which acts as the Proton donor.

This sequence belongs to the glycosyl hydrolase 88 family. As to quaternary structure, monomer.

It carries out the reaction beta-D-4-deoxy-Delta(4)-GlcpA-(1-&gt;3)-beta-D-GalpNAc6S + H2O = N-acetyl-beta-D-galactosamine 6-sulfate + 5-dehydro-4-deoxy-D-glucuronate. Its function is as follows. Catalyzes the hydrolysis of unsaturated hyaluronate and chondroitin disaccharides. Also degrades unsaturated heparin disaccharides. Releases 4-deoxy-4,5-didehydro D-glucuronic acid or 4-deoxy-4,5-didehydro L-iduronic acid from chondroitin disaccharides, hyaluronan disaccharides and heparin disaccharides and cleaves both glycosidic (1-&gt;3) and (1-&gt;4) bonds. Prefers sulfated glycosaminoglycans compared to unsulfated glycosaminoglycans. Probably required for mammalian cells invasion through the degradation of extracellular sulfated glycosaminoglycans such as chondroitin and hyaluronan. The sequence is that of Unsaturated chondroitin disaccharide hydrolase (ugl) from Streptococcus pneumoniae (strain ATCC BAA-255 / R6).